Here is a 74-residue protein sequence, read N- to C-terminus: Sec-independent protein translocase protein TatA (74 aa).

Residues 1–21 (MGSMSWIHWVIVLGIVALLFG) form a helical membrane-spanning segment. A disordered region spans residues 51-74 (EVADNKAKSALPRTEAEAEELRKS). The segment covering 64–74 (TEAEAEELRKS) has biased composition (basic and acidic residues).

Belongs to the TatA/E family. In terms of assembly, the Tat system comprises two distinct complexes: a TatABC complex, containing multiple copies of TatA, TatB and TatC subunits, and a separate TatA complex, containing only TatA subunits. Substrates initially bind to the TatABC complex, which probably triggers association of the separate TatA complex to form the active translocon.

It localises to the cell inner membrane. Functionally, part of the twin-arginine translocation (Tat) system that transports large folded proteins containing a characteristic twin-arginine motif in their signal peptide across membranes. TatA could form the protein-conducting channel of the Tat system. This is Sec-independent protein translocase protein TatA from Caulobacter vibrioides (strain ATCC 19089 / CIP 103742 / CB 15) (Caulobacter crescentus).